The primary structure comprises 169 residues: Peptide deformylase (169 aa).

2 residues coordinate Fe cation: Cys91 and His133. Glu134 is an active-site residue. His137 lines the Fe cation pocket.

It belongs to the polypeptide deformylase family. Requires Fe(2+) as cofactor.

It catalyses the reaction N-terminal N-formyl-L-methionyl-[peptide] + H2O = N-terminal L-methionyl-[peptide] + formate. In terms of biological role, removes the formyl group from the N-terminal Met of newly synthesized proteins. Requires at least a dipeptide for an efficient rate of reaction. N-terminal L-methionine is a prerequisite for activity but the enzyme has broad specificity at other positions. This chain is Peptide deformylase, found in Klebsiella pneumoniae (strain 342).